A 260-amino-acid chain; its full sequence is uncharacterized protein (260 aa).

6 consecutive transmembrane segments (helical) span residues 39-59, 68-88, 111-131, 159-179, 193-213, and 214-234; these read IFYLLFIPLSKNFIYTDLIEA, IIVGIYLSYPIFLYQIWSFLI, FLGSCIGYYLLFPIAFTFFLG, LIFSLSICFQLPVLILFLFKI, FIYLFFFILAAILSPPDILSQ, and FILVIPLILFFEISLFCIKLI.

It belongs to the TatC family.

The protein localises to the mitochondrion membrane. This is an uncharacterized protein from Reclinomonas americana.